The following is a 255-amino-acid chain: Electron transfer flavoprotein subunit beta (255 aa).

At A2 the chain carries N-acetylalanine. AMP contacts are provided by residues A9, 39–42 (NPFC), C66, and 123–134 (GKQAIDDDCNQT). The recognition loop stretch occupies residues 183–205 (ADLRLNEPRYATLPNIMKAKKKK). K200 bears the N6,N6,N6-trimethyllysine; by ETFBKMT; alternate mark. Residue K200 is modified to N6-acetyllysine; alternate. An N6-methyllysine; alternate modification is found at K200. K203 is modified (N6,N6,N6-trimethyllysine; by ETFBKMT). Residue K210 is modified to N6-acetyllysine; alternate. Position 210 is an N6-succinyllysine; alternate (K210). 2 positions are modified to phosphoserine: S223 and S226. An N6-acetyllysine modification is found at K238. K248 carries the post-translational modification N6-acetyllysine; alternate. K248 is subject to N6-succinyllysine; alternate.

The protein belongs to the ETF beta-subunit/FixA family. As to quaternary structure, heterodimer composed of ETFA and ETFB. Identified in a complex that contains ETFA, ETFB and ETFRF1. Interacts with ACADM. Methylated. Trimethylation at Lys-200 and Lys-203 may negatively regulate the activity in electron transfer from acyl-CoA dehydrogenases.

It localises to the mitochondrion matrix. Heterodimeric electron transfer flavoprotein that accepts electrons from several mitochondrial dehydrogenases, including acyl-CoA dehydrogenases, glutaryl-CoA and sarcosine dehydrogenase. It transfers the electrons to the main mitochondrial respiratory chain via ETF-ubiquinone oxidoreductase. Required for normal mitochondrial fatty acid oxidation and normal amino acid metabolism. ETFB binds an AMP molecule that probably has a purely structural role. The polypeptide is Electron transfer flavoprotein subunit beta (Pongo abelii (Sumatran orangutan)).